We begin with the raw amino-acid sequence, 477 residues long: Cytochrome P450 708A2 (477 aa).

The chain crosses the membrane as a helical span at residues 3-23 (FVWSAAVWVIAVAAVVISKWL). Heme is bound at residue Cys426.

It belongs to the cytochrome P450 family. Heme serves as cofactor. Expressed primarily in the root epidermis.

It is found in the membrane. Functionally, hydroxylates thalianol into thalian-diol. This Arabidopsis thaliana (Mouse-ear cress) protein is Cytochrome P450 708A2 (CYP708A2).